Consider the following 27-residue polypeptide: Conotoxin Lo6/7b (27 aa).

3 disulfide bridges follow: C2/C16, C9/C19, and C15/C26. Y27 is modified (tyrosine amide).

As to expression, expressed by the venom duct.

It localises to the secreted. Its function is as follows. 1 uM of this toxin does not show any effect on voltage-gated sodium and potassium channels. Does not show antibacterial activity on both Gram-negative and Gram-positive bacteria. The polypeptide is Conotoxin Lo6/7b (Conasprella longurionis (Cone snail)).